We begin with the raw amino-acid sequence, 259 residues long: HTH-type quorum sensing-dependent transcriptional regulator VjbR (259 aa).

The segment at 76-179 (KNYFAIDPVF…AGIIHGTVCG (104 aa)) is C12-HSL binding. Residues 183–248 (ANSVASLLTP…SAVATALSLG (66 aa)) enclose the HTH luxR-type domain. The segment at residues 207–226 (DGEIAEILSIARWTVVTYLQ) is a DNA-binding region (H-T-H motif).

Its function is as follows. Transcriptional regulator involved in the global control of Brucella gene expression. Mediates the effects of the quorum sensing autoinducer C12-HSL (N-dodecanoyl-homoserine lactone) on a large and diverse number of genes. The chain is HTH-type quorum sensing-dependent transcriptional regulator VjbR (vjbR) from Brucella ovis (strain ATCC 25840 / 63/290 / NCTC 10512).